The following is an 847-amino-acid chain: FAST kinase domain-containing protein 1, mitochondrial (847 aa).

Lys-360 is subject to N6-acetyllysine. The RAP domain occupies 777–837 (IALEFLDSKA…KDARMDYLRE (61 aa)).

The protein belongs to the FAST kinase family. In terms of tissue distribution, expression detected in spleen, thymus, testis, ovary, colon, heart, smooth muscle, kidney, brain, lung, liver and white adipose tissue with highest expression in heart.

The protein localises to the mitochondrion. In terms of biological role, involved in the down-regulation of mitochondrial MT-ND3 mRNA levels which leads to decreased respiratory complex I abundance and activity. The polypeptide is FAST kinase domain-containing protein 1, mitochondrial (FASTKD1) (Homo sapiens (Human)).